The primary structure comprises 1598 residues: Mushroom body large-type Kenyon cell-specific protein 1 (1598 aa).

Disordered regions lie at residues 83–105, 140–387, 436–462, and 495–525; these read PGNL…SLPA, RHHH…SDGI, PHDD…PMSV, and PLVG…SQDN. Basic residues predominate over residues 140–151; the sequence is RHHHLQNHHHHL. Positions 164–174 are enriched in low complexity; the sequence is QQQQQQQQRQQ. Residues 175 to 191 show a composition bias toward basic and acidic residues; the sequence is QRQEERRLRPDEIKVEV. Residues 210–263 show a composition bias toward low complexity; sequence STDASTPATVTTTGATTTLPAASATGTGPATPSAVVATSNATAAMTTGTTTIPT. The span at 275-291 shows a compositional bias: acidic residues; the sequence is EGADDRDDDEENEEEED. 3 stretches are compositionally biased toward basic and acidic residues: residues 292 to 305, 315 to 324, and 335 to 346; these read GRGQ…LKLD, LRREKDRGSR, and DGTKERTEEVAL. A Phosphoserine; by MAPK modification is found at S444. A compositionally biased stretch (low complexity) spans 445 to 461; sequence PQSDSSSSSRSAESPMS. Residues 582–634 form the HTH psq-type 1 domain; the sequence is VGAGGGRRAYTEEELQAALRDIQSGKLGTRRAAVIYGIPRSTLRNKVYKLAME. The segment at residues 610 to 630 is a DNA-binding region (H-T-H motif); sequence TRRAAVIYGIPRSTLRNKVYK. Disordered stretches follow at residues 636–705, 797–877, 962–1045, 1082–1145, 1248–1283, and 1301–1598; these read ERDA…SGAE, RLSK…DSAQ, GQTV…NYDR, ERHL…NGIK, ETSA…NGSF, and RAMT…SVEQ. Residues 653–687 are compositionally biased toward low complexity; that stretch reads APATTITTITTTTTTTTTTTTTTTTPNTTQNASAT. A compositionally biased stretch (acidic residues) spans 694-705; that stretch reads DEVDDKELSGAE. The segment covering 820–855 has biased composition (low complexity); that stretch reads THPQAQAQAQPQQQQQQQQQQPQQQQQQQQQQQQQQ. A compositionally biased stretch (gly residues) spans 965–975; the sequence is VSGGGMGGCQP. Positions 1003–1021 are enriched in low complexity; it reads ANAQQGQAQAQAKPQSQEA. The 53-residue stretch at 1034–1086 folds into the HTH psq-type 2 domain; that stretch reads RPKRGKYRNYDRDSLVEAVRAVQRGEMSVHRAGSYYGVPHSTLEYKVKERHLM. The segment at residues 1062–1082 is a DNA-binding region (H-T-H motif); the sequence is VHRAGSYYGVPHSTLEYKVKE. The span at 1093–1102 shows a compositional bias: basic and acidic residues; the sequence is QKQSDDKTKE. A compositionally biased stretch (low complexity) spans 1103–1120; it reads TSTVTAAAAATNIRPGTA. A compositionally biased stretch (low complexity) spans 1309-1318; the sequence is QQQQASSQQQ. Composition is skewed to basic and acidic residues over residues 1383 to 1392 and 1407 to 1442; these read DRGRNDDGSD and GSRD…DRKT. The span at 1447-1466 shows a compositional bias: low complexity; the sequence is PQQPQQQQQQQQQQQQQQQQ. Residues 1481–1497 show a composition bias toward basic and acidic residues; it reads TDKKSACDSKLIVDHSS. The span at 1501 to 1547 shows a compositional bias: low complexity; that stretch reads QQQQPQQQQQQQQQQQPQQQSQQPQQQQPQPQQQQQQQQQQQPQQQQ. Residues 1562–1577 show a composition bias toward polar residues; sequence RGYNSGNNRSGEQANS.

In terms of assembly, homodimer. As to expression, large-type Kenyon cells of mushroom body.

It is found in the nucleus. Functionally, transcriptional activator which binds to the consensus sequence 5'-CCCTATCGATCGATCTCTACCT-3'. May play a role in higher-order sensory processing. This chain is Mushroom body large-type Kenyon cell-specific protein 1 (Mblk-1), found in Apis mellifera (Honeybee).